Reading from the N-terminus, the 305-residue chain is UDP-3-O-acyl-N-acetylglucosamine deacetylase (305 aa).

3 residues coordinate Zn(2+): H79, H238, and D242. The active-site Proton donor is H265.

This sequence belongs to the LpxC family. Zn(2+) is required as a cofactor.

It carries out the reaction a UDP-3-O-[(3R)-3-hydroxyacyl]-N-acetyl-alpha-D-glucosamine + H2O = a UDP-3-O-[(3R)-3-hydroxyacyl]-alpha-D-glucosamine + acetate. It functions in the pathway glycolipid biosynthesis; lipid IV(A) biosynthesis; lipid IV(A) from (3R)-3-hydroxytetradecanoyl-[acyl-carrier-protein] and UDP-N-acetyl-alpha-D-glucosamine: step 2/6. Catalyzes the hydrolysis of UDP-3-O-myristoyl-N-acetylglucosamine to form UDP-3-O-myristoylglucosamine and acetate, the committed step in lipid A biosynthesis. In Salmonella agona (strain SL483), this protein is UDP-3-O-acyl-N-acetylglucosamine deacetylase.